A 147-amino-acid polypeptide reads, in one-letter code: Microsomal glutathione S-transferase 2 (147 aa).

3 helical membrane-spanning segments follow: residues 6 to 26 (ILLA…ALQV), 59 to 79 (FYPI…QVFA), and 111 to 131 (SLGI…NSFL).

This sequence belongs to the MAPEG family. In terms of assembly, homotrimer. Liver, spleen, skeletal muscle, heart, adrenals, pancreas, prostate, testis, fetal liver, and fetal spleen. Very low expression in lung, brain, placenta and bone marrow. Abundantly expressed in human umbilical vein endothelial cells (at protein level).

The protein resides in the endoplasmic reticulum membrane. Its subcellular location is the microsome membrane. The catalysed reaction is RX + glutathione = an S-substituted glutathione + a halide anion + H(+). It carries out the reaction 1-chloro-2,4-dinitrobenzene + glutathione = 2,4-dinitrophenyl-S-glutathione + chloride + H(+). It catalyses the reaction leukotriene C4 = leukotriene A4 + glutathione. The enzyme catalyses (5S)-hydroperoxy-(6E,8Z,11Z,14Z)-eicosatetraenoate + 2 glutathione = (5S)-hydroxy-(6E,8Z,11Z,14Z)-eicosatetraenoate + glutathione disulfide + H2O. With respect to regulation, each monomer can bind on GSH molecule but only one subunit is catalytically active. Catalyzes several different glutathione-dependent reactions. Catalyzes the glutathione-dependent reduction of lipid hydroperoxides, such as 5-HPETE. Has glutathione transferase activity, toward xenobiotic electrophiles, such as 1-chloro-2, 4-dinitrobenzene (CDNB). Also catalyzes the conjugation of leukotriene A4 with reduced glutathione to form leukotriene C4 (LTC4). Involved in oxidative DNA damage induced by ER stress and anticancer agents by activating LTC4 biosynthetic machinery in nonimmune cells. The sequence is that of Microsomal glutathione S-transferase 2 (MGST2) from Homo sapiens (Human).